The primary structure comprises 535 residues: Phosphoenolpyruvate carboxykinase (ATP) 1 (535 aa).

The substrate site is built by Arg-58, Tyr-193, and Lys-199. Residues Lys-199, His-218, and 234-242 each bind ATP; that span reads GLSGTGKTT. 2 residues coordinate Mn(2+): Lys-199 and His-218. Asp-255 serves as a coordination point for Mn(2+). Residues Glu-283, Arg-321, 440-441, and Thr-446 contribute to the ATP site; that span reads RI. Arg-321 lines the substrate pocket.

The protein belongs to the phosphoenolpyruvate carboxykinase (ATP) family. The cofactor is Mn(2+).

It localises to the cytoplasm. It carries out the reaction oxaloacetate + ATP = phosphoenolpyruvate + ADP + CO2. It functions in the pathway carbohydrate biosynthesis; gluconeogenesis. Functionally, involved in the gluconeogenesis. Catalyzes the conversion of oxaloacetate (OAA) to phosphoenolpyruvate (PEP) through direct phosphoryl transfer between the nucleoside triphosphate and OAA. In Salinibacter ruber (strain DSM 13855 / M31), this protein is Phosphoenolpyruvate carboxykinase (ATP) 1.